Here is a 150-residue protein sequence, read N- to C-terminus: Ribonuclease pancreatic delta-type (150 aa).

A signal peptide spans 1 to 25 (MGLEKSFILFSLLVLVLGWVQPSLG). A substrate-binding site is contributed by Arg35. His37 serves as the catalytic Proton acceptor. Cystine bridges form between Cys51–Cys110, Cys65–Cys121, Cys83–Cys136, and Cys90–Cys98. Substrate is bound by residues 66–70 (KPVNT) and Lys91. His145 acts as the Proton donor in catalysis.

This sequence belongs to the pancreatic ribonuclease family. In terms of assembly, monomer.

It localises to the secreted. It catalyses the reaction an [RNA] containing cytidine + H2O = an [RNA]-3'-cytidine-3'-phosphate + a 5'-hydroxy-ribonucleotide-3'-[RNA].. The enzyme catalyses an [RNA] containing uridine + H2O = an [RNA]-3'-uridine-3'-phosphate + a 5'-hydroxy-ribonucleotide-3'-[RNA].. Its function is as follows. Endonuclease that catalyzes the cleavage of RNA on the 3' side of pyrimidine nucleotides. Acts on single-stranded and double-stranded RNA. The polypeptide is Ribonuclease pancreatic delta-type (Rattus tiomanicus (Malayan field rat)).